The sequence spans 80 residues: MMKPLRQQNRQIISYIPRVEPAPPEHAIKMDAFRDVWILRGKYVAFVLMGESFQRSPAFSVPESAQRWANQVRQENEIAD.

The protein belongs to the CedA family.

In terms of biological role, activates the cell division inhibited by chromosomal DNA over-replication. In Salmonella arizonae (strain ATCC BAA-731 / CDC346-86 / RSK2980), this protein is Cell division activator CedA.